The primary structure comprises 347 residues: MLKSEFHYDLPQNLIAQSPLPERSASRLLCLDGATGALEDKSFRDIEKLLRPGDLLVFNDTRVLPARLFGRKETGGAVEILLERLLGERLMLAHVRASKAPRPGTWLALEAEHRVRVVERDGDLFLLELAGEEPLQTVLEQIGHMPLPPYITRPDTSADLERYQTVYATRPGAVAAPTAGLHFDTELLGRLRGAGIDMARVTLHVGAGTFQPVRTENLEDHRMHAEYCEVGPEVVKAVERARGRGGRVVAVGTTSMRSLETAASGGSLRTFSGETRLFIKPGFRFNCVDALVTNFHLPESTLLVLVCAFAGHRETLAAYRHAIAQAYRFFSYGDAMFVTPNEPAANR.

It belongs to the QueA family. As to quaternary structure, monomer.

It localises to the cytoplasm. The enzyme catalyses 7-aminomethyl-7-carbaguanosine(34) in tRNA + S-adenosyl-L-methionine = epoxyqueuosine(34) in tRNA + adenine + L-methionine + 2 H(+). It participates in tRNA modification; tRNA-queuosine biosynthesis. In terms of biological role, transfers and isomerizes the ribose moiety from AdoMet to the 7-aminomethyl group of 7-deazaguanine (preQ1-tRNA) to give epoxyqueuosine (oQ-tRNA). The chain is S-adenosylmethionine:tRNA ribosyltransferase-isomerase from Methylococcus capsulatus (strain ATCC 33009 / NCIMB 11132 / Bath).